Reading from the N-terminus, the 188-residue chain is Probable thymidylate kinase (188 aa).

ATP is bound at residue 11-18 (GIDGSGKT).

It belongs to the thymidylate kinase family.

It carries out the reaction dTMP + ATP = dTDP + ADP. The protein is Probable thymidylate kinase (tmk) of Methanocaldococcus jannaschii (strain ATCC 43067 / DSM 2661 / JAL-1 / JCM 10045 / NBRC 100440) (Methanococcus jannaschii).